A 670-amino-acid polypeptide reads, in one-letter code: mRNA cleavage and polyadenylation specificity factor complex subunit pta1 (670 aa).

To yeast PTA1. As to quaternary structure, component of the cleavage and polyadenylation factor (CPF) complex, which is composed of cft1, cft2, ysh1, pta1, swd2, pfs2, dis2, yth1, ssu72, and fip1.

It is found in the nucleus. Component of the cleavage and polyadenylation factor (CPF) complex, which plays a key role in polyadenylation-dependent pre-mRNA 3'-end formation and cooperates with cleavage factors including the CFIA complex and NAB4/CFIB. This is mRNA cleavage and polyadenylation specificity factor complex subunit pta1 (pta1) from Schizosaccharomyces pombe (strain 972 / ATCC 24843) (Fission yeast).